A 283-amino-acid chain; its full sequence is Formamidopyrimidine-DNA glycosylase (283 aa).

Proline 2 (schiff-base intermediate with DNA) is an active-site residue. Catalysis depends on glutamate 3, which acts as the Proton donor. Lysine 58 functions as the Proton donor; for beta-elimination activity in the catalytic mechanism. Residues histidine 100, arginine 119, and arginine 162 each contribute to the DNA site. An FPG-type zinc finger spans residues 247–283 (DVYGREGEPCRRAGCDGTVQRITQSGRSSFYCAQCQR). The Proton donor; for delta-elimination activity role is filled by arginine 273.

It belongs to the FPG family. As to quaternary structure, monomer. Requires Zn(2+) as cofactor.

It catalyses the reaction Hydrolysis of DNA containing ring-opened 7-methylguanine residues, releasing 2,6-diamino-4-hydroxy-5-(N-methyl)formamidopyrimidine.. It carries out the reaction 2'-deoxyribonucleotide-(2'-deoxyribose 5'-phosphate)-2'-deoxyribonucleotide-DNA = a 3'-end 2'-deoxyribonucleotide-(2,3-dehydro-2,3-deoxyribose 5'-phosphate)-DNA + a 5'-end 5'-phospho-2'-deoxyribonucleoside-DNA + H(+). Involved in base excision repair of DNA damaged by oxidation or by mutagenic agents. Acts as a DNA glycosylase that recognizes and removes damaged bases. Has a preference for oxidized purines, such as 7,8-dihydro-8-oxoguanine (8-oxoG). Has AP (apurinic/apyrimidinic) lyase activity and introduces nicks in the DNA strand. Cleaves the DNA backbone by beta-delta elimination to generate a single-strand break at the site of the removed base with both 3'- and 5'-phosphates. The sequence is that of Formamidopyrimidine-DNA glycosylase from Ruegeria pomeroyi (strain ATCC 700808 / DSM 15171 / DSS-3) (Silicibacter pomeroyi).